Consider the following 640-residue polypeptide: Choline O-acetyltransferase (640 aa).

The residue at position 17 (Ser-17) is a Phosphoserine. Residue His-334 is the Proton acceptor of the active site. At Ser-365 the chain carries Phosphoserine. Residues 412-424 (GKTFIKKQKYSPD), Ser-450, and Gln-551 contribute to the CoA site. The tract at residues 614–640 (CSSRQPADSKPPAPKEKARGPSQAKQS) is disordered.

Belongs to the carnitine/choline acetyltransferase family. Monomer.

It carries out the reaction choline + acetyl-CoA = acetylcholine + CoA. Functionally, catalyzes the reversible synthesis of acetylcholine (ACh) from acetyl CoA and choline at cholinergic synapses. The sequence is that of Choline O-acetyltransferase (Chat) from Rattus norvegicus (Rat).